Reading from the N-terminus, the 436-residue chain is Tubulin epsilon and delta complex protein 2 (436 aa).

Disordered stretches follow at residues 53–76 (ARTP…PSSQ) and 94–191 (VRKG…PSSA). Residues 111 to 131 (TSKAATSGAAAASHPRAPSRG) are compositionally biased toward low complexity. Residues 153-170 (DYPEHRLRSKGDKTHVRT) are compositionally biased toward basic and acidic residues. S161 is subject to Phosphoserine.

Interacts with TEDC1. Found in a complex with TEDC1, TEDC2, TUBE1 and TUBD1.

The protein localises to the cell projection. It localises to the cilium. Its subcellular location is the cytoplasm. The protein resides in the cytoskeleton. It is found in the microtubule organizing center. The protein localises to the centrosome. It localises to the centriole. Its function is as follows. Acts as a positive regulator of ciliary hedgehog signaling. Required for centriole stability. The sequence is that of Tubulin epsilon and delta complex protein 2 from Mus musculus (Mouse).